A 606-amino-acid polypeptide reads, in one-letter code: Aspartate--tRNA(Asp/Asn) ligase (606 aa).

Position 177 (Glu177) interacts with L-aspartate. Positions 201–204 are aspartate; sequence QLFK. Arg223 contributes to the L-aspartate binding site. ATP-binding positions include 223-225 and Gln232; that span reads RDE. L-aspartate is bound at residue His461. ATP is bound at residue Glu499. L-aspartate is bound at residue Arg506. Residue 551–554 coordinates ATP; the sequence is GMDR.

The protein belongs to the class-II aminoacyl-tRNA synthetase family. Type 1 subfamily. Homodimer.

It is found in the cytoplasm. It carries out the reaction tRNA(Asx) + L-aspartate + ATP = L-aspartyl-tRNA(Asx) + AMP + diphosphate. Functionally, aspartyl-tRNA synthetase with relaxed tRNA specificity since it is able to aspartylate not only its cognate tRNA(Asp) but also tRNA(Asn). Reaction proceeds in two steps: L-aspartate is first activated by ATP to form Asp-AMP and then transferred to the acceptor end of tRNA(Asp/Asn). In Prochlorococcus marinus (strain MIT 9313), this protein is Aspartate--tRNA(Asp/Asn) ligase.